Here is a 353-residue protein sequence, read N- to C-terminus: DNA polymerase IV (353 aa).

In terms of domain architecture, UmuC spans 6 to 187 (IIHVDCDCFY…LPVSKLHGVG (182 aa)). 2 residues coordinate Mg(2+): Asp10 and Asp105. The active site involves Glu106.

Belongs to the DNA polymerase type-Y family. In terms of assembly, monomer. The cofactor is Mg(2+).

The protein localises to the cytoplasm. The enzyme catalyses DNA(n) + a 2'-deoxyribonucleoside 5'-triphosphate = DNA(n+1) + diphosphate. Functionally, poorly processive, error-prone DNA polymerase involved in untargeted mutagenesis. Copies undamaged DNA at stalled replication forks, which arise in vivo from mismatched or misaligned primer ends. These misaligned primers can be extended by PolIV. Exhibits no 3'-5' exonuclease (proofreading) activity. May be involved in translesional synthesis, in conjunction with the beta clamp from PolIII. In Pseudomonas fluorescens (strain Pf0-1), this protein is DNA polymerase IV.